The following is a 614-amino-acid chain: Dihydroxy-acid dehydratase (614 aa).

Asp-81 contributes to the Mg(2+) binding site. Cys-122 is a binding site for [2Fe-2S] cluster. Mg(2+)-binding residues include Asp-123 and Lys-124. Lys-124 bears the N6-carboxylysine mark. Cys-193 contacts [2Fe-2S] cluster. Mg(2+) is bound at residue Glu-489. The Proton acceptor role is filled by Ser-515.

This sequence belongs to the IlvD/Edd family. In terms of assembly, homodimer. [2Fe-2S] cluster serves as cofactor. Mg(2+) is required as a cofactor.

The catalysed reaction is (2R)-2,3-dihydroxy-3-methylbutanoate = 3-methyl-2-oxobutanoate + H2O. It catalyses the reaction (2R,3R)-2,3-dihydroxy-3-methylpentanoate = (S)-3-methyl-2-oxopentanoate + H2O. The protein operates within amino-acid biosynthesis; L-isoleucine biosynthesis; L-isoleucine from 2-oxobutanoate: step 3/4. Its pathway is amino-acid biosynthesis; L-valine biosynthesis; L-valine from pyruvate: step 3/4. Functionally, functions in the biosynthesis of branched-chain amino acids. Catalyzes the dehydration of (2R,3R)-2,3-dihydroxy-3-methylpentanoate (2,3-dihydroxy-3-methylvalerate) into 2-oxo-3-methylpentanoate (2-oxo-3-methylvalerate) and of (2R)-2,3-dihydroxy-3-methylbutanoate (2,3-dihydroxyisovalerate) into 2-oxo-3-methylbutanoate (2-oxoisovalerate), the penultimate precursor to L-isoleucine and L-valine, respectively. The protein is Dihydroxy-acid dehydratase of Saccharophagus degradans (strain 2-40 / ATCC 43961 / DSM 17024).